The following is a 215-amino-acid chain: UPF0502 protein YceH (215 aa).

Lysine 80 carries the N6-acetyllysine modification.

This sequence belongs to the UPF0502 family.

This Shigella flexneri serotype 5b (strain 8401) protein is UPF0502 protein YceH.